Here is a 1067-residue protein sequence, read N- to C-terminus: Carbamoyl phosphate synthase large chain (1067 aa).

Positions 1–401 are carboxyphosphate synthetic domain; sequence MPLNKDIKKV…AFLKGIRSLE (401 aa). ATP-binding residues include Arg129, Arg169, Gly175, Gly176, Lys208, Val210, Glu215, Gly241, Ile242, His243, Gln284, and Glu298. The ATP-grasp 1 domain maps to 133–327; sequence RDMMNRINQP…IAKVAAKIAL (195 aa). Mg(2+) contacts are provided by Gln284, Glu298, and Asn300. Mn(2+) is bound by residues Gln284, Glu298, and Asn300. An oligomerization domain region spans residues 402–549; the sequence is IGKYSLEHKK…YSTYEQYDEV (148 aa). The tract at residues 550–932 is carbamoyl phosphate synthetic domain; that stretch reads VVSDNKKVVV…ALYKGFVGAS (383 aa). The region spanning 674–864 is the ATP-grasp 2 domain; that stretch reads DDLLERLNIA…IVDIATRIML (191 aa). ATP-binding residues include Arg710, Lys749, Leu751, Glu755, Gly780, Val781, His782, Ser783, Gln823, and Glu835. Mg(2+)-binding residues include Gln823, Glu835, and Asn837. 3 residues coordinate Mn(2+): Gln823, Glu835, and Asn837. In terms of domain architecture, MGS-like spans 933 to 1067; the sequence is MYTGDKGKTI…NRELEVFNLI (135 aa). The tract at residues 933-1067 is allosteric domain; it reads MYTGDKGKTI…NRELEVFNLI (135 aa).

The protein belongs to the CarB family. As to quaternary structure, composed of two chains; the small (or glutamine) chain promotes the hydrolysis of glutamine to ammonia, which is used by the large (or ammonia) chain to synthesize carbamoyl phosphate. Tetramer of heterodimers (alpha,beta)4. Mg(2+) serves as cofactor. Requires Mn(2+) as cofactor.

It carries out the reaction hydrogencarbonate + L-glutamine + 2 ATP + H2O = carbamoyl phosphate + L-glutamate + 2 ADP + phosphate + 2 H(+). The catalysed reaction is hydrogencarbonate + NH4(+) + 2 ATP = carbamoyl phosphate + 2 ADP + phosphate + 2 H(+). It participates in amino-acid biosynthesis; L-arginine biosynthesis; carbamoyl phosphate from bicarbonate: step 1/1. Its pathway is pyrimidine metabolism; UMP biosynthesis via de novo pathway; (S)-dihydroorotate from bicarbonate: step 1/3. Large subunit of the glutamine-dependent carbamoyl phosphate synthetase (CPSase). CPSase catalyzes the formation of carbamoyl phosphate from the ammonia moiety of glutamine, carbonate, and phosphate donated by ATP, constituting the first step of 2 biosynthetic pathways, one leading to arginine and/or urea and the other to pyrimidine nucleotides. The large subunit (synthetase) binds the substrates ammonia (free or transferred from glutamine from the small subunit), hydrogencarbonate and ATP and carries out an ATP-coupled ligase reaction, activating hydrogencarbonate by forming carboxy phosphate which reacts with ammonia to form carbamoyl phosphate. The sequence is that of Carbamoyl phosphate synthase large chain from Clostridium perfringens (strain 13 / Type A).